The following is a 90-amino-acid chain: UPF0297 protein LVIS_1222 (90 aa).

The protein belongs to the UPF0297 family.

The chain is UPF0297 protein LVIS_1222 from Levilactobacillus brevis (strain ATCC 367 / BCRC 12310 / CIP 105137 / JCM 1170 / LMG 11437 / NCIMB 947 / NCTC 947) (Lactobacillus brevis).